The following is a 388-amino-acid chain: Gastricsin (388 aa).

A signal peptide spans 1 to 16; the sequence is MKWMVVVLVCLQLLEA. A propeptide spans 17–59 (activation peptide); the sequence is AVVKVPLKKFKSIRETMKEKGLLGEFLRTHKYDPAWKYRFGDL. The region spanning 73–385 is the Peptidase A1 domain; sequence YFGEISIGTP…DLGNNRVGFA (313 aa). Residue D91 is part of the active site. Intrachain disulfides connect C104–C109 and C267–C271. D276 is a catalytic residue. A disulfide bridge connects residues C310 and C343.

It belongs to the peptidase A1 family.

The protein resides in the secreted. The catalysed reaction is More restricted specificity than pepsin A, but shows preferential cleavage at Tyr-|-Xaa bonds. High activity on hemoglobin.. Its function is as follows. Hydrolyzes a variety of proteins. This is Gastricsin (PGC) from Homo sapiens (Human).